The sequence spans 502 residues: Type II secretion system protein E (502 aa).

An ATP-binding site is contributed by 263–270 (GPTGSGKT). Zn(2+) contacts are provided by C396, C399, C429, and C432. The disordered stretch occupies residues 461-480 (SSEQEMTRHARTSGPSIRDD).

The protein belongs to the GSP E family. In terms of assembly, homodimer. Dimerization is directed by a relatively short domain near the extreme N-terminus and is essential for extracellular protein secretion. May form homooligomers. Interacts with XcpY/GspL. Forms an inner membrane platform subcomplex with XcpS/GspF, XcpY/GspL and XcpZ/GspM. The cofactor is Zn(2+).

It localises to the cell inner membrane. It catalyses the reaction ATP + H2O + cellular proteinSide 1 = ADP + phosphate + cellular proteinSide 2.. Its function is as follows. ATPase component of the type II secretion system required for the energy-dependent secretion of extracellular factors such as proteases and toxins from the periplasm. Acts as a molecular motor to provide the energy that is required for assembly of the pseudopilus and the extrusion of substrates generated in the cytoplasm. In Pseudomonas aeruginosa (strain ATCC 15692 / DSM 22644 / CIP 104116 / JCM 14847 / LMG 12228 / 1C / PRS 101 / PAO1), this protein is Type II secretion system protein E (xcpR).